The following is a 374-amino-acid chain: S-adenosylmethionine synthase 2 (374 aa).

Glu-11 is a Mg(2+) binding site. Position 17 (His-17) interacts with ATP. Position 45 (Glu-45) interacts with K(+). The L-methionine site is built by Glu-58 and Gln-101. ATP contacts are provided by residues Asp-169–Lys-171, Ser-237–Phe-240, Asp-248, Arg-254–Lys-255, Ala-271, Lys-275, and Lys-279. Asp-248 provides a ligand contact to L-methionine. Residue Lys-279 participates in L-methionine binding.

Belongs to the AdoMet synthase family. In terms of assembly, homotetramer. Mn(2+) is required as a cofactor. Mg(2+) serves as cofactor. The cofactor is Co(2+). Requires K(+) as cofactor. Expressed in vegetative and reproductive tissues.

The protein resides in the cytoplasm. The enzyme catalyses L-methionine + ATP + H2O = S-adenosyl-L-methionine + phosphate + diphosphate. Its pathway is amino-acid biosynthesis; S-adenosyl-L-methionine biosynthesis; S-adenosyl-L-methionine from L-methionine: step 1/1. Its function is as follows. Catalyzes the formation of S-adenosylmethionine from methionine and ATP. The reaction comprises two steps that are both catalyzed by the same enzyme: formation of S-adenosylmethionine (AdoMet) and triphosphate, and subsequent hydrolysis of the triphosphate. This chain is S-adenosylmethionine synthase 2 (SAMS2), found in Pisum sativum (Garden pea).